The following is a 970-amino-acid chain: MLDFLKRFFGSSQERTLKKFQKLVDKVNLYDEMLAPLSDEELRNKTVELKKRYQEGESLDDMLPEAYAVVKNVCRRLTGTPVEVSGYHQNWDMVPYDVQILGAIAMHKGFITEMQTGEGKTLTAVMPLYLNALTGKPVHLVTVNDYLAQRDCEWVGSILRWLGLTTGVLIAGSPLEKRKEIYRCDVVYGTASEFGFDYLRDNSIATSVDEQVGRGFYFAIIDEVDSILIDEARTPLIISGPGEKHNPVYFELKDKVAGLVQLQRELCNQLALEARRGLELYLDMDILPKDKKVVEGISEFCRSLWLVSKGMPLNRVLRRVREHPDLRAMIDKWDIYYHAEQNKEESIEQLSQLYIIVDEHNNDFELTDRGMQQWVDKAGGSAEDFVMMDMGHEYSLIDSDESLSPTDKINRKIAVSEEDTQRKARAHGLRQLLRAQLLMERDVDYIVRDDQIIIIDEHTGRPQPGRRFSEGLHQAIEAKEHVTIRKESQTFATVTLQNFFRLYEKLAGMTGTAITESKEFKEIYNLYVLQVPTFKTCLRIDHNDEFYMTEREKYHAIVNEIARVHKEGNPILIGTESVEVSEKLSRILKQNRIDHTVLNAKNHAQEAEIIAAAGKLGAVTVATNMAGRGTDIKLDEEAVVVGGLHVIGTSRHQSRRIDRQLRGRCARLGDPGAAKFFLSFEDRLMRLFASPKLNALIRHFRPPEGEAMSDPMFNKLIETAQKRVEARNYTIRKHTLEYDDVMNKQRQTIYAFRNEIIRSEDVFPLAKEAIYHVSLMIASLITSRNHPTGHSLPNLEEWMNYSFPIKLNLDELRKLTTLDAIAEQVAEDLIEVFQNKFSSMVEEITTAAGDDVDAKGICRDIIRSVMIMHIDEQWKIHLVDMDLLRSEVGLRTVGQKDPLIEFKHESFLLFESLVRDIRIAIVKHLFRLELTMTREQRPQNVIPVVATSFQNDENFGPMELTVISDADDDE.

Residues glutamine 99, 117-121 (GEGKT), and aspartate 631 contribute to the ATP site.

It belongs to the SecA family. In terms of assembly, monomer and homodimer. Part of the essential Sec protein translocation apparatus which comprises SecA, SecYEG and auxiliary proteins SecDF. Other proteins may also be involved.

The protein resides in the cell inner membrane. It localises to the cytoplasm. The enzyme catalyses ATP + H2O + cellular proteinSide 1 = ADP + phosphate + cellular proteinSide 2.. Its function is as follows. Part of the Sec protein translocase complex. Interacts with the SecYEG preprotein conducting channel. Has a central role in coupling the hydrolysis of ATP to the transfer of proteins into and across the cell membrane, serving as an ATP-driven molecular motor driving the stepwise translocation of polypeptide chains across the membrane. The polypeptide is Protein translocase subunit SecA (Chlamydia caviae (strain ATCC VR-813 / DSM 19441 / 03DC25 / GPIC) (Chlamydophila caviae)).